The chain runs to 434 residues: Enolase (434 aa).

Residue Q165 participates in (2R)-2-phosphoglycerate binding. E207 (proton donor) is an active-site residue. Mg(2+) is bound by residues D244, E291, and D318. Residues K343, R372, S373, and K394 each coordinate (2R)-2-phosphoglycerate. Catalysis depends on K343, which acts as the Proton acceptor.

It belongs to the enolase family. The cofactor is Mg(2+).

Its subcellular location is the cytoplasm. The protein resides in the secreted. The protein localises to the cell surface. The enzyme catalyses (2R)-2-phosphoglycerate = phosphoenolpyruvate + H2O. The protein operates within carbohydrate degradation; glycolysis; pyruvate from D-glyceraldehyde 3-phosphate: step 4/5. Functionally, catalyzes the reversible conversion of 2-phosphoglycerate (2-PG) into phosphoenolpyruvate (PEP). It is essential for the degradation of carbohydrates via glycolysis. The protein is Enolase of Staphylococcus aureus (strain USA300 / TCH1516).